The chain runs to 245 residues: ATP synthase subunit b (245 aa).

The helical transmembrane segment at 3–23 (SFNLLTIVSSIVNLLALAWII) threads the bilayer.

Belongs to the ATPase B chain family. As to quaternary structure, F-type ATPases have 2 components, F(1) - the catalytic core - and F(0) - the membrane proton channel. F(1) has five subunits: alpha(3), beta(3), gamma(1), delta(1), epsilon(1). F(0) has three main subunits: a(1), b(2) and c(10-14). The alpha and beta chains form an alternating ring which encloses part of the gamma chain. F(1) is attached to F(0) by a central stalk formed by the gamma and epsilon chains, while a peripheral stalk is formed by the delta and b chains.

It localises to the cell inner membrane. Functionally, f(1)F(0) ATP synthase produces ATP from ADP in the presence of a proton or sodium gradient. F-type ATPases consist of two structural domains, F(1) containing the extramembraneous catalytic core and F(0) containing the membrane proton channel, linked together by a central stalk and a peripheral stalk. During catalysis, ATP synthesis in the catalytic domain of F(1) is coupled via a rotary mechanism of the central stalk subunits to proton translocation. Its function is as follows. Component of the F(0) channel, it forms part of the peripheral stalk, linking F(1) to F(0). This Dictyoglomus thermophilum (strain ATCC 35947 / DSM 3960 / H-6-12) protein is ATP synthase subunit b.